Here is a 476-residue protein sequence, read N- to C-terminus: Cysteine--tRNA ligase (476 aa).

Cys-29 is a Zn(2+) binding site. A 'HIGH' region motif is present at residues 31-41 (PTVYDYTHLGH). Zn(2+) is bound by residues Cys-209, His-234, and Glu-238. Residues 266-270 (KMSKS) carry the 'KMSKS' region motif. Lys-269 serves as a coordination point for ATP.

The protein belongs to the class-I aminoacyl-tRNA synthetase family. It depends on Zn(2+) as a cofactor.

It is found in the cytoplasm. The catalysed reaction is tRNA(Cys) + L-cysteine + ATP = L-cysteinyl-tRNA(Cys) + AMP + diphosphate. The sequence is that of Cysteine--tRNA ligase from Thermococcus onnurineus (strain NA1).